Consider the following 148-residue polypeptide: uncharacterized protein (148 aa).

A signal peptide spans 1 to 19 (MLSNAKLLLSLAMASTALG). Residues Asn-41 and Asn-59 are each glycosylated (N-linked (GlcNAc...) asparagine). Asn-127 carries GPI-anchor amidated asparagine lipidation. Positions 128–148 (AANARAIPGALGLAGAVMMLL) are cleaved as a propeptide — removed in mature form.

It belongs to the SED1 family. The GPI-anchor is attached to the protein in the endoplasmic reticulum and serves to target the protein to the cell surface. There, the glucosamine-inositol phospholipid moiety is cleaved off and the GPI-modified mannoprotein is covalently attached via its lipidless GPI glycan remnant to the 1,6-beta-glucan of the outer cell wall layer.

It is found in the secreted. The protein localises to the cell wall. The protein resides in the membrane. Functionally, cell wall protein that plays a role in adaptation and resistance to cell wall stress. This is an uncharacterized protein from Saccharomyces cerevisiae (strain ATCC 204508 / S288c) (Baker's yeast).